The sequence spans 451 residues: Proline--tRNA ligase (451 aa).

The protein belongs to the class-II aminoacyl-tRNA synthetase family. ProS type 2 subfamily. In terms of assembly, homodimer.

It is found in the cytoplasm. The enzyme catalyses tRNA(Pro) + L-proline + ATP = L-prolyl-tRNA(Pro) + AMP + diphosphate. Catalyzes the attachment of proline to tRNA(Pro) in a two-step reaction: proline is first activated by ATP to form Pro-AMP and then transferred to the acceptor end of tRNA(Pro). In Roseobacter denitrificans (strain ATCC 33942 / OCh 114) (Erythrobacter sp. (strain OCh 114)), this protein is Proline--tRNA ligase.